A 97-amino-acid polypeptide reads, in one-letter code: Late embryogenesis abundant protein Lea5 (97 aa).

This sequence belongs to the LEA type 3 family.

This is Late embryogenesis abundant protein Lea5 (LEA5) from Citrus sinensis (Sweet orange).